A 458-amino-acid polypeptide reads, in one-letter code: Phosphoglucosamine mutase (458 aa).

Catalysis depends on Ser106, which acts as the Phosphoserine intermediate. 4 residues coordinate Mg(2+): Ser106, Asp247, Asp249, and Asp251. The residue at position 106 (Ser106) is a Phosphoserine.

The protein belongs to the phosphohexose mutase family. Mg(2+) serves as cofactor. Post-translationally, activated by phosphorylation.

It catalyses the reaction alpha-D-glucosamine 1-phosphate = D-glucosamine 6-phosphate. Catalyzes the conversion of glucosamine-6-phosphate to glucosamine-1-phosphate. This chain is Phosphoglucosamine mutase, found in Chlamydia abortus (strain DSM 27085 / S26/3) (Chlamydophila abortus).